The following is a 233-amino-acid chain: Lipoprotein-releasing system ATP-binding protein LolD (233 aa).

The 224-residue stretch at 10 to 233 folds into the ABC transporter domain; sequence YRLEGVGKEY…AGELYDQHRP (224 aa). 46–53 lines the ATP pocket; sequence GASGSGKS.

It belongs to the ABC transporter superfamily. Lipoprotein translocase (TC 3.A.1.125) family. In terms of assembly, the complex is composed of two ATP-binding proteins (LolD) and two transmembrane proteins (LolC and LolE).

It is found in the cell inner membrane. Part of the ABC transporter complex LolCDE involved in the translocation of mature outer membrane-directed lipoproteins, from the inner membrane to the periplasmic chaperone, LolA. Responsible for the formation of the LolA-lipoprotein complex in an ATP-dependent manner. The sequence is that of Lipoprotein-releasing system ATP-binding protein LolD from Nitratidesulfovibrio vulgaris (strain ATCC 29579 / DSM 644 / CCUG 34227 / NCIMB 8303 / VKM B-1760 / Hildenborough) (Desulfovibrio vulgaris).